The primary structure comprises 247 residues: ATP synthase subunit a, chloroplastic (247 aa).

The next 5 membrane-spanning stretches (helical) occupy residues 38–58 (QVLI…SIAV), 95–115 (VPFI…GALL), 134–154 (INTT…AGLT), 199–219 (LVVV…VMFL), and 220–240 (GLFT…AYIG).

It belongs to the ATPase A chain family. As to quaternary structure, F-type ATPases have 2 components, CF(1) - the catalytic core - and CF(0) - the membrane proton channel. CF(1) has five subunits: alpha(3), beta(3), gamma(1), delta(1), epsilon(1). CF(0) has four main subunits: a, b, b' and c.

The protein localises to the plastid. It is found in the chloroplast thylakoid membrane. Functionally, key component of the proton channel; it plays a direct role in the translocation of protons across the membrane. In Eucalyptus globulus subsp. globulus (Tasmanian blue gum), this protein is ATP synthase subunit a, chloroplastic.